The primary structure comprises 212 residues: Transcriptional regulator GfcR (212 aa).

The disordered stretch occupies residues 38–60 (LVERSGTGTEPDTSDDGGPHDIH).

It belongs to the purine/pyrimidine phosphoribosyltransferase family. GfcR subfamily.

In terms of biological role, DNA-binding transcriptional regulator that functions as a regulator of central sugar catabolic pathways. This Haloarcula marismortui (strain ATCC 43049 / DSM 3752 / JCM 8966 / VKM B-1809) (Halobacterium marismortui) protein is Transcriptional regulator GfcR.